The chain runs to 477 residues: Ribulose bisphosphate carboxylase large chain (477 aa).

Positions 1–2 (MS) are excised as a propeptide. Proline 3 is modified (N-acetylproline). Residue lysine 14 is modified to N6,N6,N6-trimethyllysine. Substrate is bound by residues asparagine 123 and threonine 173. Lysine 175 (proton acceptor) is an active-site residue. Lysine 177 lines the substrate pocket. Mg(2+)-binding residues include lysine 201, aspartate 203, and glutamate 204. Lysine 201 carries the post-translational modification N6-carboxylysine. Residue histidine 294 is the Proton acceptor of the active site. The substrate site is built by arginine 295, histidine 327, and serine 379.

This sequence belongs to the RuBisCO large chain family. Type I subfamily. As to quaternary structure, heterohexadecamer of 8 large chains and 8 small chains; disulfide-linked. The disulfide link is formed within the large subunit homodimers. Mg(2+) serves as cofactor. In terms of processing, the disulfide bond which can form in the large chain dimeric partners within the hexadecamer appears to be associated with oxidative stress and protein turnover.

Its subcellular location is the plastid. The protein localises to the chloroplast. The catalysed reaction is 2 (2R)-3-phosphoglycerate + 2 H(+) = D-ribulose 1,5-bisphosphate + CO2 + H2O. It catalyses the reaction D-ribulose 1,5-bisphosphate + O2 = 2-phosphoglycolate + (2R)-3-phosphoglycerate + 2 H(+). Functionally, ruBisCO catalyzes two reactions: the carboxylation of D-ribulose 1,5-bisphosphate, the primary event in carbon dioxide fixation, as well as the oxidative fragmentation of the pentose substrate in the photorespiration process. Both reactions occur simultaneously and in competition at the same active site. This is Ribulose bisphosphate carboxylase large chain from Persea americana (Avocado).